The following is a 404-amino-acid chain: Activity-regulated cytoskeleton-associated protein (404 aa).

The stretch at Glu-51 to Val-78 forms a coiled coil. The interval Val-351–Ile-404 is disordered. Residues Pro-363–Gln-393 show a composition bias toward polar residues. Pro residues predominate over residues Pro-394–Ile-404.

It belongs to the ARC/ARG3.1 family. Homooligomer; homooligomerizes into virion-like capsids. Post-translationally, palmitoylation anchors the protein into the membrane by allowing direct insertion into the hydrophobic core of the lipid bilayer. As to expression, expressed at various levels throughout the brain.

It localises to the extracellular vesicle membrane. The protein resides in the postsynaptic cell membrane. Its subcellular location is the synapse. The protein localises to the postsynaptic density. It is found in the early endosome membrane. It localises to the cell projection. The protein resides in the dendrite. Its subcellular location is the cytoplasm. The protein localises to the cytoskeleton. It is found in the cell cortex. It localises to the dendritic spine. In terms of biological role, master regulator of synaptic plasticity that self-assembles into virion-like capsids that encapsulate RNAs and mediate intercellular RNA transfer in the nervous system. ARC protein is released from neurons in extracellular vesicles that mediate the transfer of ARC mRNA into new target cells, where ARC mRNA can undergo activity-dependent translation. ARC capsids are endocytosed and are able to transfer ARC mRNA into the cytoplasm of neurons. Acts as a key regulator of synaptic plasticity: required for protein synthesis-dependent forms of long-term potentiation (LTP) and depression (LTD) and for the formation of long-term memory. Regulates synaptic plasticity by promoting endocytosis of AMPA receptors (AMPARs) in response to synaptic activity: this endocytic pathway maintains levels of surface AMPARs in response to chronic changes in neuronal activity through synaptic scaling, thereby contributing to neuronal homeostasis. Acts as a postsynaptic mediator of activity-dependent synapse elimination in the developing cerebellum by mediating elimination of surplus climbing fiber synapses. Accumulates at weaker synapses, probably to prevent their undesired enhancement. This suggests that ARC-containing virion-like capsids may be required to eliminate synaptic material. The chain is Activity-regulated cytoskeleton-associated protein from Gallus gallus (Chicken).